We begin with the raw amino-acid sequence, 59 residues long: Cecropin-C type 1 (59 aa).

Residues 1 to 23 (MNFTKIFVLIAMAALLLVGQSEA) form the signal peptide.

Its subcellular location is the secreted. In terms of biological role, cecropins have lytic and antibacterial activity against several Gram-positive and Gram-negative bacteria. The protein is Cecropin-C type 1 (CECC1) of Aedes albopictus (Asian tiger mosquito).